We begin with the raw amino-acid sequence, 462 residues long: Arginine biosynthesis bifunctional protein ArgJ, mitochondrial (462 aa).

Threonine 200, lysine 228, threonine 239, glutamate 326, asparagine 457, and threonine 462 together coordinate substrate. Residue threonine 239 is the Nucleophile of the active site.

Belongs to the ArgJ family. In terms of assembly, heterodimer of an alpha and a beta chain. The alpha and beta chains are autoproteolytically processed from a single precursor protein within the mitochondrion.

It localises to the mitochondrion matrix. It carries out the reaction N(2)-acetyl-L-ornithine + L-glutamate = N-acetyl-L-glutamate + L-ornithine. It catalyses the reaction L-glutamate + acetyl-CoA = N-acetyl-L-glutamate + CoA + H(+). It participates in amino-acid biosynthesis; L-arginine biosynthesis; L-ornithine and N-acetyl-L-glutamate from L-glutamate and N(2)-acetyl-L-ornithine (cyclic): step 1/1. The protein operates within amino-acid biosynthesis; L-arginine biosynthesis; N(2)-acetyl-L-ornithine from L-glutamate: step 1/4. In terms of biological role, catalyzes two activities which are involved in the cyclic version of arginine biosynthesis: the synthesis of acetylglutamate from glutamate and acetyl-CoA, and of ornithine by transacetylation between acetylornithine and glutamate. The polypeptide is Arginine biosynthesis bifunctional protein ArgJ, mitochondrial (Pyrenophora tritici-repentis (strain Pt-1C-BFP) (Wheat tan spot fungus)).